The following is a 416-amino-acid chain: MTYHPKSDFLRVMQERGYLADCTDKQALDEALSKGVVPAYIGYDATAASLHVGHLLNIMMLRWLQKTGHKPITLMGGGTTKVGDPSFRSEERPLLTPDKIDENIEGMRKVFARYLSYGEGATDALMLNNAEWLDHLNYLDFLRDIGRHFSVNRMLSFESVKSRLDREQSLSFLEFNYMILQAYDFLELFRRYGCRLQMGGSDQWGNIVNGIDLTRRVLEGEIFGLTSPLLTTSDGRKMGKSAGGAVWLNGEMLAPYDFWQFWRNTTDADVGRFLKLYTELPVEECDRLGALQGSEINAAKILLANEVTTLLHGRDAAEAAEATARAVFEEGGVGGALEVVELPATTLGEGLSVAHFLVAAGLVASGKEAKRLVAESGLRFNNEPVGDANAPVTAATVGEELKVSIGRKKHKLVRLS.

Tyr40 contributes to the L-tyrosine binding site. The 'HIGH' region motif lies at 45–54 (ATAASLHVGH). 2 residues coordinate L-tyrosine: Tyr177 and Gln181. The short motif at 237–241 (KMGKS) is the 'KMSKS' region element. An ATP-binding site is contributed by Lys240. The S4 RNA-binding domain maps to 351 to 416 (LSVAHFLVAA…RKKHKLVRLS (66 aa)).

The protein belongs to the class-I aminoacyl-tRNA synthetase family. TyrS type 1 subfamily. Homodimer.

Its subcellular location is the cytoplasm. The enzyme catalyses tRNA(Tyr) + L-tyrosine + ATP = L-tyrosyl-tRNA(Tyr) + AMP + diphosphate + H(+). In terms of biological role, catalyzes the attachment of tyrosine to tRNA(Tyr) in a two-step reaction: tyrosine is first activated by ATP to form Tyr-AMP and then transferred to the acceptor end of tRNA(Tyr). The protein is Tyrosine--tRNA ligase of Cereibacter sphaeroides (strain KD131 / KCTC 12085) (Rhodobacter sphaeroides).